We begin with the raw amino-acid sequence, 440 residues long: Transposon Ty1-JR2 Gag polyprotein (440 aa).

A compositionally biased stretch (low complexity) spans 1-16 (MESQQLSQHSHISHGS). Disordered stretches follow at residues 1 to 93 (MESQ…MMTQ), 126 to 173 (PQSQ…RPPP), and 352 to 440 (GSRN…PETY). Composition is skewed to polar residues over residues 48-60 (TKAN…TPAS), 71-93 (SPQT…MMTQ), and 127-152 (QSQF…GNTF). Positions 153-165 (TDSSSADSDMTST) are enriched in low complexity. Residues 299 to 401 (NNGIHINNKV…NSKSKTARAH (103 aa)) are RNA-binding. Over residues 402 to 418 (NVSTSNNSPSTDNDSIS) the composition is skewed to low complexity. S416 carries the phosphoserine modification. Polar residues predominate over residues 419 to 428 (KSTTEPIQLN). A compositionally biased stretch (basic and acidic residues) spans 429 to 440 (NKHDLHLRPETY).

As to quaternary structure, homotrimer.

Its subcellular location is the cytoplasm. In terms of biological role, capsid protein (CA) is the structural component of the virus-like particle (VLP), forming the shell that encapsulates the retrotransposons dimeric RNA genome. The particles are assembled from trimer-clustered units and there are holes in the capsid shells that allow for the diffusion of macromolecules. CA also has nucleocapsid-like chaperone activity, promoting primer tRNA(i)-Met annealing to the multipartite primer-binding site (PBS), dimerization of Ty1 RNA and initiation of reverse transcription. The protein is Transposon Ty1-JR2 Gag polyprotein (TY1A-JR2) of Saccharomyces cerevisiae (strain ATCC 204508 / S288c) (Baker's yeast).